Here is a 266-residue protein sequence, read N- to C-terminus: 4-hydroxy-tetrahydrodipicolinate reductase (266 aa).

10 to 15 is a binding site for NAD(+); sequence GPRGRM. An NADP(+)-binding site is contributed by Lys-38. NAD(+) is bound by residues 99-101 and 125-128; these read GTT and APNF. Catalysis depends on His-155, which acts as the Proton donor/acceptor. His-156 lines the (S)-2,3,4,5-tetrahydrodipicolinate pocket. The Proton donor role is filled by Lys-159. A (S)-2,3,4,5-tetrahydrodipicolinate-binding site is contributed by 165–166; that stretch reads GT.

It belongs to the DapB family.

The protein resides in the cytoplasm. The enzyme catalyses (S)-2,3,4,5-tetrahydrodipicolinate + NAD(+) + H2O = (2S,4S)-4-hydroxy-2,3,4,5-tetrahydrodipicolinate + NADH + H(+). It catalyses the reaction (S)-2,3,4,5-tetrahydrodipicolinate + NADP(+) + H2O = (2S,4S)-4-hydroxy-2,3,4,5-tetrahydrodipicolinate + NADPH + H(+). It functions in the pathway amino-acid biosynthesis; L-lysine biosynthesis via DAP pathway; (S)-tetrahydrodipicolinate from L-aspartate: step 4/4. In terms of biological role, catalyzes the conversion of 4-hydroxy-tetrahydrodipicolinate (HTPA) to tetrahydrodipicolinate. The polypeptide is 4-hydroxy-tetrahydrodipicolinate reductase (Bacillus anthracis (strain A0248)).